Consider the following 309-residue polypeptide: MRKIIVGSRKSKLALTQTNWFIDQLKALGLPYEFEVKEIVTKGDVILDVTLSKVGGKGLFVKEIEHALLTKEIDMAVHSMKDMPAVLPEGLMIGCTPKRVDPRDAFISKSGASYKELAEGAILGTSSLRRSAQLLAARPDLQVKWIRGNIDTRLRKLKEEDYDAIILATAGLQRMGWDNEVITEHLDETLCVPAVGQGALAIECREDDKDLLQLLAHINDAVTEKTVAAERVFLHKLEGGCQVPIAGYATITENDAIELTALVGSMDGSVLLKETVVGTDPEKVGLEAADRLIKQGAKELILAANKGQQ.

S-(dipyrrolylmethanemethyl)cysteine is present on cysteine 241.

This sequence belongs to the HMBS family. Monomer. The cofactor is dipyrromethane.

The enzyme catalyses 4 porphobilinogen + H2O = hydroxymethylbilane + 4 NH4(+). It participates in porphyrin-containing compound metabolism; protoporphyrin-IX biosynthesis; coproporphyrinogen-III from 5-aminolevulinate: step 2/4. Tetrapolymerization of the monopyrrole PBG into the hydroxymethylbilane pre-uroporphyrinogen in several discrete steps. This Bacillus anthracis (strain A0248) protein is Porphobilinogen deaminase.